The following is a 217-amino-acid chain: MQHSAWHALIKEQLPEGYFAKINHFLDEVYASGTIYPPREKVFNAIQTTDLADVKVVILGQDPYHGPRQAQGLSFSVPDDIPAPPSLQNILKELADDIGVKESHDLTSWAQQGVLLLNAGLTVPAGQANAHAGLIWESFTDAIIKVVNEKSDPVVFILWGSYARKKKALISNPQHLIIESAHPSPLSAYRGFFGSKPFSRTNDFLVAKGLEPINWLA.

The active-site Proton acceptor is Asp62.

It belongs to the uracil-DNA glycosylase (UDG) superfamily. UNG family.

It is found in the cytoplasm. It catalyses the reaction Hydrolyzes single-stranded DNA or mismatched double-stranded DNA and polynucleotides, releasing free uracil.. Excises uracil residues from the DNA which can arise as a result of misincorporation of dUMP residues by DNA polymerase or due to deamination of cytosine. The protein is Uracil-DNA glycosylase of Streptococcus sanguinis (strain SK36).